Consider the following 127-residue polypeptide: Protein ApaG (127 aa).

The ApaG domain maps to 3–127 (ESEKYRIEVE…FMLAMPRVLH (125 aa)).

This chain is Protein ApaG, found in Aromatoleum aromaticum (strain DSM 19018 / LMG 30748 / EbN1) (Azoarcus sp. (strain EbN1)).